An 819-amino-acid chain; its full sequence is Leucine--tRNA ligase (819 aa).

Residues 40-51 (PYPSGAGLHVGH) carry the 'HIGH' region motif. The 'KMSKS' region motif lies at 600-604 (KMSKS). Lys603 lines the ATP pocket.

Belongs to the class-I aminoacyl-tRNA synthetase family.

Its subcellular location is the cytoplasm. The enzyme catalyses tRNA(Leu) + L-leucine + ATP = L-leucyl-tRNA(Leu) + AMP + diphosphate. The chain is Leucine--tRNA ligase from Chlamydia trachomatis serovar D (strain ATCC VR-885 / DSM 19411 / UW-3/Cx).